The following is a 486-amino-acid chain: Aspartyl/glutamyl-tRNA(Asn/Gln) amidotransferase subunit B (486 aa).

This sequence belongs to the GatB/GatE family. GatB subfamily. Heterotrimer of A, B and C subunits.

The catalysed reaction is L-glutamyl-tRNA(Gln) + L-glutamine + ATP + H2O = L-glutaminyl-tRNA(Gln) + L-glutamate + ADP + phosphate + H(+). It catalyses the reaction L-aspartyl-tRNA(Asn) + L-glutamine + ATP + H2O = L-asparaginyl-tRNA(Asn) + L-glutamate + ADP + phosphate + 2 H(+). Allows the formation of correctly charged Asn-tRNA(Asn) or Gln-tRNA(Gln) through the transamidation of misacylated Asp-tRNA(Asn) or Glu-tRNA(Gln) in organisms which lack either or both of asparaginyl-tRNA or glutaminyl-tRNA synthetases. The reaction takes place in the presence of glutamine and ATP through an activated phospho-Asp-tRNA(Asn) or phospho-Glu-tRNA(Gln). The sequence is that of Aspartyl/glutamyl-tRNA(Asn/Gln) amidotransferase subunit B from Janthinobacterium sp. (strain Marseille) (Minibacterium massiliensis).